Consider the following 444-residue polypeptide: Cobyrinate a,c-diamide synthase (444 aa).

The region spanning 250-438 is the GATase cobBQ-type domain; it reads IIAIAQDRAF…PHIHFFGSYK (189 aa). The active-site Nucleophile is cysteine 332.

It belongs to the CobB/CbiA family. Mg(2+) is required as a cofactor.

The catalysed reaction is cob(II)yrinate + 2 L-glutamine + 2 ATP + 2 H2O = cob(II)yrinate a,c diamide + 2 L-glutamate + 2 ADP + 2 phosphate + 2 H(+). It participates in cofactor biosynthesis; adenosylcobalamin biosynthesis; cob(II)yrinate a,c-diamide from sirohydrochlorin (anaerobic route): step 10/10. Functionally, catalyzes the ATP-dependent amidation of the two carboxylate groups at positions a and c of cobyrinate, using either L-glutamine or ammonia as the nitrogen source. In Fusobacterium nucleatum subsp. nucleatum (strain ATCC 25586 / DSM 15643 / BCRC 10681 / CIP 101130 / JCM 8532 / KCTC 2640 / LMG 13131 / VPI 4355), this protein is Cobyrinate a,c-diamide synthase.